Consider the following 423-residue polypeptide: Polyglutamylase complex subunit TTLL1 (423 aa).

The TTL domain maps to 1–367 (MAGRVKWVTD…NGEIPDCKWN (367 aa)). ATP is bound by residues Lys-138, 144–145 (QG), 181–184 (SVYI), and 194–196 (KFD). Residue Gln-144 participates in a protein binding. Arg-220 lines the L-glutamate pocket. Position 241–242 (241–242 (TN)) interacts with ATP. Position 259 (Lys-259) interacts with L-glutamate. 3 residues coordinate Mg(2+): Asp-313, Glu-326, and Asn-328. Lys-344 serves as a coordination point for L-glutamate. Residues 390–423 (DGAERELRNRPGQPVGPRAGRSRDSGRSVLTTWK) form a disordered region.

This sequence belongs to the tubulin polyglutamylase family. As to quaternary structure, part of the neuronal tubulin polyglutamylase complex which contains TPGS1, TPGS2, TTLL1, LRRC49 and NICN1. Interacts with PCM1, CSTPP1 and LRRC49. The cofactor is Mg(2+). As to expression, highly expressed in brain, heart and kidney. Expressed in liver, lung, muscle, spleen, testis and trachea. In the brain, expressed in ependymal cilia, cortex, corpus callosum and striatum. Expressed in blastomere.

It localises to the cytoplasm. The protein localises to the cytoskeleton. The protein resides in the cilium basal body. It is found in the cilium axoneme. Its subcellular location is the cell projection. It localises to the cilium. The protein localises to the flagellum. The enzyme catalyses (L-glutamyl)(n)-gamma-L-glutamyl-L-glutamyl-[protein] + L-glutamate + ATP = (L-glutamyl)(n+1)-gamma-L-glutamyl-L-glutamyl-[protein] + ADP + phosphate + H(+). In terms of biological role, catalytic subunit of a polyglutamylase complex which modifies tubulin, generating side chains of glutamate on the gamma-carboxyl group of specific glutamate residues within the C-terminal tail of tubulin. Probably involved in the side-chain elongation step of the polyglutamylation reaction rather than the initiation step. Modifies both alpha- and beta-tubulins with a preference for the alpha-tail. Unlike most polyglutamylases of the tubulin--tyrosine ligase family, only displays a catalytic activity when in complex with other proteins as it is most likely lacking domains important for autonomous activity. Part of the neuronal tubulin polyglutamylase complex. Mediates cilia and flagella polyglutamylation which is essential for their biogenesis and motility. Involved in respiratory motile cilia function through the regulation of beating asymmetry. Essential for sperm flagella biogenesis, motility and male fertility. Also mediates glutamylation of non-tubulin proteins. Involved in KLF4 glutamylation which impedes its ubiquitination, thereby leading to somatic cell reprogramming, pluripotency maintenance and embryogenesis. This is Polyglutamylase complex subunit TTLL1 from Mus musculus (Mouse).